The chain runs to 83 residues: MPAIEVGRIAVVIAGRRAGQKVVVADIIDKNFVLVTGAGLNKVKRRRMNVKHLEPLPERVNIQRGASDEEIKAALEGAGISLE.

It belongs to the eukaryotic ribosomal protein eL14 family. As to quaternary structure, part of the 50S ribosomal subunit.

This Thermococcus kodakarensis (strain ATCC BAA-918 / JCM 12380 / KOD1) (Pyrococcus kodakaraensis (strain KOD1)) protein is Large ribosomal subunit protein eL14.